An 818-amino-acid polypeptide reads, in one-letter code: Probable helicase MAGATAMA 3 (818 aa).

The 301-residue stretch at 259–559 (NKSQKEAIDV…KMLKTQYRMH (301 aa)) folds into the UvrD-like helicase ATP-binding domain. 280 to 287 (GPPGTGKT) is an ATP binding site. 2 stretches are compositionally biased toward acidic residues: residues 781–790 (PDAPLYEDES) and 798–818 (GDDDFGDGDADQDDVAMAGED). Residues 781–818 (PDAPLYEDESLPVAPYGGDDDFGDGDADQDDVAMAGED) form a disordered region.

This sequence belongs to the helicase family. As to expression, expressed in flowers, siliques, leaves, roots and shoot apex.

Its subcellular location is the nucleus. In terms of biological role, probable helicase that may regulate RNA molecules involved in nucleolar organization and pollen tube guidance. The polypeptide is Probable helicase MAGATAMA 3 (MAA3) (Arabidopsis thaliana (Mouse-ear cress)).